Reading from the N-terminus, the 769-residue chain is Neprilysin-21 (769 aa).

The Cytoplasmic segment spans residues 1-26 (MKPENGAATWHPAKRSCLGRLTTLET). The chain crosses the membrane as a helical; Signal-anchor for type II membrane protein span at residues 27–47 (LLLVFLGLLITALLSVLFLWL). Residues 48–769 (WVLDGYKTFT…MNPERKCQVW (722 aa)) are Extracellular-facing. N-linked (GlcNAc...) asparagine glycosylation is present at Asn69. The Peptidase M13 domain occupies 85 to 769 (VCTSRECVRL…MNPERKCQVW (685 aa)). 5 disulfide bridges follow: Cys86–Cys91, Cys109–Cys754, Cys117–Cys714, Cys173–Cys428, and Cys638–Cys766. N-linked (GlcNAc...) asparagine glycans are attached at residues Asn221, Asn240, Asn272, Asn307, Asn356, Asn412, and Asn506. His601 contributes to the Zn(2+) binding site. The active site involves Glu602. Residues His605 and Glu663 each contribute to the Zn(2+) site. Asp667 serves as the catalytic Proton donor. N-linked (GlcNAc...) asparagine glycosylation is found at Asn684 and Asn698.

The protein belongs to the peptidase M13 family. Zn(2+) is required as a cofactor.

It localises to the cell membrane. In terms of biological role, probable cell surface protease. This chain is Neprilysin-21 (nep-21), found in Caenorhabditis elegans.